Here is a 535-residue protein sequence, read N- to C-terminus: Solute carrier family 22 member 7 (535 aa).

12 helical membrane passes run Leu-21–Met-41, Ile-144–Ser-164, Val-178–Val-198, Leu-202–Leu-222, Val-232–Ile-252, Trp-257–Pro-277, Ile-344–Leu-364, Gln-375–Val-395, Leu-402–Ser-422, Ile-429–Leu-449, Leu-464–Leu-484, and Leu-489–Leu-509.

Belongs to the major facilitator (TC 2.A.1) superfamily. Organic cation transporter (TC 2.A.1.19) family. In terms of tissue distribution, expressed in liver and kidney. Expressed at low levels in adipose tissue. Expressed in fetal liver. In kidney, expressed at the brush border of the proximal tubule S3 segment (S3) in the outer stripe and medullary rays. In kidney, expression is higher in female than male.

It localises to the basolateral cell membrane. It is found in the apical cell membrane. The protein localises to the cell membrane. It carries out the reaction orotate(out) + L-glutamate(in) = orotate(in) + L-glutamate(out). It catalyses the reaction 3',5'-cyclic GMP(in) = 3',5'-cyclic GMP(out). The catalysed reaction is GMP(in) = GMP(out). The enzyme catalyses 2'-deoxyguanosine(in) = 2'-deoxyguanosine(out). It carries out the reaction GDP(in) = GDP(out). It catalyses the reaction guanosine(in) = guanosine(out). The catalysed reaction is GTP(in) = GTP(out). The enzyme catalyses 3',5'-cyclic AMP(in) = 3',5'-cyclic AMP(out). It carries out the reaction creatinine(in) = creatinine(out). It catalyses the reaction prostaglandin E2(out) = prostaglandin E2(in). The catalysed reaction is 2-oxoglutarate(in) = 2-oxoglutarate(out). The enzyme catalyses glutarate(in) = glutarate(out). It carries out the reaction urate(out) = urate(in). It catalyses the reaction estrone 3-sulfate(out) = estrone 3-sulfate(in). Its function is as follows. Functions as a Na(+)-independent bidirectional multispecific transporter. Contributes to the renal and hepatic elimination of endogenous organic compounds from the systemic circulation into the urine and bile, respectively. Capable of transporting a wide range of purine and pyrimidine nucleobases, nucleosides, and nucleotides with cGMP, 2'deoxyguanosine and GMP being the preferred substrates. Functions as a pH- and chloride-independent cGMP bidirectional facilitative transporter that can regulate both intracellular and extracellular levels of cGMP and may be involved in cGMP signaling pathways. Mediates orotate/glutamate bidirectional exchange and most likely display a physiological role in hepatic release of glutamate into the blood. Involved in renal secretion and possible reabsorption of creatinine. Able to uptake prostaglandin E2 (PGE2) and may contribute to PGE2 renal excretion. Also transports alpha-ketoglutarate and urate. Apart from the orotate/glutamate exchange, the counterions for the uptake of other SLC22A7/OAT2 substrates remain to be identified. The polypeptide is Solute carrier family 22 member 7 (Rattus norvegicus (Rat)).